The sequence spans 270 residues: Putative phosphoenolpyruvate synthase regulatory protein (270 aa).

150-157 is an ADP binding site; that stretch reads GVSRCGKT.

It belongs to the pyruvate, phosphate/water dikinase regulatory protein family. PSRP subfamily.

The catalysed reaction is [pyruvate, water dikinase] + ADP = [pyruvate, water dikinase]-phosphate + AMP + H(+). It catalyses the reaction [pyruvate, water dikinase]-phosphate + phosphate + H(+) = [pyruvate, water dikinase] + diphosphate. In terms of biological role, bifunctional serine/threonine kinase and phosphorylase involved in the regulation of the phosphoenolpyruvate synthase (PEPS) by catalyzing its phosphorylation/dephosphorylation. The chain is Putative phosphoenolpyruvate synthase regulatory protein from Shewanella loihica (strain ATCC BAA-1088 / PV-4).